A 447-amino-acid polypeptide reads, in one-letter code: MELSQMSELMGLSVLLGLLALMATAAVARGWLRAGEERSGRPACQKANGFPPDKSSGSKKQKQYQRIRKEKPQQHNFTHRLLAAALKSHSGNISCMDFSSNGKYLATCADDRTIRIWSTKDFLQREHRSMRANVELDHATLVRFSPDCRAFIVWLANGDTLRVFKMTKREDGGYTFTATPEDFPKKHKAPVIDIGIANTGKFIMTASSDTTVLIWSLKGQVLSTINTNQMNNTHAAVSPCGRFVASCGFTPDVKVWEVCFGKKGEFQEVVRAFELKGHSAAVHSFAFSNDSRRMASVSKDGTWKLWDTDVEYKKKQDPYLLKTGRFEEAAGAAPCRLALSPNAQVLALASGSSIHLYNTRRGEKEECFERVHGECIANLSFDITGRFLASCGDRAVRLFHNTPGHRAMVEEMQGHLKRASNESTRQRLQQQLTQAQETLKSLGALKK.

Positions 38–72 are disordered; it reads RSGRPACQKANGFPPDKSSGSKKQKQYQRIRKEKP. The segment covering 57 to 69 has biased composition (basic residues); sequence GSKKQKQYQRIRK. 7 WD repeats span residues 88–127, 134–174, 186–226, 228–267, 277–316, 329–367, and 371–409; these read SHSG…QREH, VELD…DGGY, KHKA…STIN, NQMN…GEFQ, GHSA…KKKQ, AAGA…KEEC, and VHGE…RAMV. Lysine 168 is covalently cross-linked (Glycyl lysine isopeptide (Lys-Gly) (interchain with G-Cter in SUMO2)). Threonine 433 bears the Phosphothreonine; by ATM or ATR mark.

This is Transducin beta-like protein 2 (TBL2) from Homo sapiens (Human).